The chain runs to 335 residues: Nucleoid-associated protein SeAg_B2375 (335 aa).

This sequence belongs to the YejK family.

It is found in the cytoplasm. The protein localises to the nucleoid. This Salmonella agona (strain SL483) protein is Nucleoid-associated protein SeAg_B2375.